The following is a 244-amino-acid chain: Phosphoadenosine 5'-phosphosulfate reductase (244 aa).

The Nucleophile; cysteine thiosulfonate intermediate role is filled by Cys239.

Belongs to the PAPS reductase family. CysH subfamily.

It localises to the cytoplasm. The enzyme catalyses [thioredoxin]-disulfide + sulfite + adenosine 3',5'-bisphosphate + 2 H(+) = [thioredoxin]-dithiol + 3'-phosphoadenylyl sulfate. Its pathway is sulfur metabolism; hydrogen sulfide biosynthesis; sulfite from sulfate: step 3/3. Its function is as follows. Catalyzes the formation of sulfite from phosphoadenosine 5'-phosphosulfate (PAPS) using thioredoxin as an electron donor. This is Phosphoadenosine 5'-phosphosulfate reductase from Escherichia coli O81 (strain ED1a).